We begin with the raw amino-acid sequence, 501 residues long: Cytochrome P450 monooxygenase janQ (501 aa).

Residues 1-16 form a helical membrane-spanning segment; sequence MVLGLLAFIWLMRAWR. The N-linked (GlcNAc...) asparagine glycan is linked to N132. Position 439 (C439) interacts with heme.

The protein belongs to the cytochrome P450 family. The cofactor is heme.

Its subcellular location is the membrane. It functions in the pathway secondary metabolite biosynthesis. Cytochrome P450 monooxygenase; part of the gene cluster that mediates the biosynthesis of the indole diterpenes janthitremanes such as shearinine K or shearinine A. The geranylgeranyl diphosphate (GGPP) synthase janG catalyzes the first step in janthitremane biosynthesis via conversion of farnesyl pyrophosphate and isopentyl pyrophosphate into geranylgeranyl pyrophosphate (GGPP). Condensation of indole-3-glycerol phosphate with GGPP by the prenyl transferase janC then forms 3-geranylgeranylindole (3-GGI). Epoxidation by the FAD-dependent monooxygenase janM leads to a epoxidized-GGI that is substrate of the terpene cyclase janB for cyclization to yield paspaline. Paspaline is subsequently converted to 13-desoxypaspaline by the cytochrome P450 monooxygenase janP, via beta-PC-M6 in a series of alpha-face oxidations. The cytochrome P450 monooxygenase janQ is proposed to carry out sequential beta-face oxidation steps at C-7 and C-13 of 13-desoxypaspaline to form paspalicine and paspalinine respectively. The indole diterpene prenyltransferase janD may then convert paspalinine into shearinine K which is substrate of janO and/or additional enzymes for oxidation and cyclization to generate shearinine A. The polypeptide is Cytochrome P450 monooxygenase janQ (Penicillium janthinellum (Penicillium vitale)).